The sequence spans 275 residues: Large ribosomal subunit protein uL2 (275 aa).

The interval 223 to 275 (GVVMNPVDHPHGGGEGRGKGHHPQSPWGVPAKGYKTRRGKRASDKFIVRRRNG) is disordered. The span at 230–240 (DHPHGGGEGRG) shows a compositional bias: basic and acidic residues.

It belongs to the universal ribosomal protein uL2 family. Part of the 50S ribosomal subunit. Forms a bridge to the 30S subunit in the 70S ribosome.

One of the primary rRNA binding proteins. Required for association of the 30S and 50S subunits to form the 70S ribosome, for tRNA binding and peptide bond formation. It has been suggested to have peptidyltransferase activity; this is somewhat controversial. Makes several contacts with the 16S rRNA in the 70S ribosome. This Fervidobacterium nodosum (strain ATCC 35602 / DSM 5306 / Rt17-B1) protein is Large ribosomal subunit protein uL2.